The sequence spans 438 residues: Shikimate transporter (438 aa).

The next 12 helical transmembrane spans lie at 28–48, 64–84, 109–129, 133–153, 168–188, 193–213, 255–275, 287–307, 318–337, 341–363, 387–407, and 411–431; these read FAGA…AALV, LAAF…GVIF, ALIG…ILLV, AIQG…SVES, VGYG…SMMT, FLSW…LGAL, IIAL…FALN, LFLN…PCFA, VYIT…FMAL, SIFW…VVCV, VASV…ITYF, and WHSV…TALL.

This sequence belongs to the major facilitator superfamily. Metabolite:H+ Symporter (MHS) family (TC 2.A.1.6) family.

It is found in the cell inner membrane. It carries out the reaction shikimate(in) + H(+)(in) = shikimate(out) + H(+)(out). Involved in the uptake of shikimate, an intermediate in the aromatic amino acid biosynthetic pathway. In Escherichia coli (strain K12), this protein is Shikimate transporter.